Consider the following 218-residue polypeptide: uncharacterized protein (218 aa).

This is an uncharacterized protein from Ureaplasma parvum serovar 3 (strain ATCC 700970).